The sequence spans 509 residues: Maturase K (509 aa).

The protein belongs to the intron maturase 2 family. MatK subfamily.

It localises to the plastid. It is found in the chloroplast. Its function is as follows. Usually encoded in the trnK tRNA gene intron. Probably assists in splicing its own and other chloroplast group II introns. The protein is Maturase K of Atropa belladonna (Belladonna).